The sequence spans 114 residues: Helper of Tim protein 13 (114 aa).

The CHY-type; degenerate zinc-finger motif lies at 10–90; sequence LVDKESRCEH…DSLQCPNCRS (81 aa). Zn(2+) contacts are provided by C17, H19, C40, C43, C67, C70, C85, and C88.

Interacts with the small Tim proteins.

The protein resides in the mitochondrion intermembrane space. The protein localises to the mitochondrion membrane. Functionally, required for the assembly or recycling of the small Tim proteins in the mitochondrial intermembrane, thereby participating in the import and insertion of multi-pass transmembrane proteins into the mitochondrial inner membrane. This is Helper of Tim protein 13 (HOT13) from Kluyveromyces lactis (strain ATCC 8585 / CBS 2359 / DSM 70799 / NBRC 1267 / NRRL Y-1140 / WM37) (Yeast).